The following is a 102-amino-acid chain: Small ribosomal subunit protein uS10 (102 aa).

This sequence belongs to the universal ribosomal protein uS10 family. As to quaternary structure, part of the 30S ribosomal subunit.

Its function is as follows. Involved in the binding of tRNA to the ribosomes. This is Small ribosomal subunit protein uS10 from Symbiobacterium thermophilum (strain DSM 24528 / JCM 14929 / IAM 14863 / T).